The sequence spans 533 residues: L-aspartate oxidase 1 (533 aa).

FAD-binding positions include 10-13 (SGLA), Lys32, 39-46 (ASDWAQGG), and Asp214. Arg281 acts as the Proton donor/acceptor in catalysis. FAD contacts are provided by residues Glu366 and 382 to 383 (SL).

Belongs to the FAD-dependent oxidoreductase 2 family. NadB subfamily. Requires FAD as cofactor.

The protein localises to the cytoplasm. The enzyme catalyses L-aspartate + O2 = iminosuccinate + H2O2. The protein operates within cofactor biosynthesis; NAD(+) biosynthesis; iminoaspartate from L-aspartate (oxidase route): step 1/1. Its function is as follows. Catalyzes the oxidation of L-aspartate to iminoaspartate, the first step in the de novo biosynthesis of NAD(+). This chain is L-aspartate oxidase 1 (nadB1), found in Ralstonia nicotianae (strain ATCC BAA-1114 / GMI1000) (Ralstonia solanacearum).